Reading from the N-terminus, the 238-residue chain is Endo-chitosanase (238 aa).

Residues 1-17 (MRLSEILTVALVTGATA) form the signal peptide. N-linked (GlcNAc...) asparagine glycosylation occurs at Asn-83.

Belongs to the glycosyl hydrolase 75 family.

It localises to the secreted. It catalyses the reaction Endohydrolysis of beta-(1-&gt;4)-linkages between D-glucosamine residues in a partly acetylated chitosan.. Chitosanase catalyzing the endo-type cleavage of chitosan, the deacylated form of chitin. Chitosanase may be crucial in the degradation of the deacetylated portion of chitin in the fungal cell wall. Chitoolisaccharides produced by the hydrolysis of partially N-acetylated chitosan are known to have many biological activities, including antibacterial activity, immune-enhancing effects, and elicitor activity. The chitosans with higher degrees of deacetylation were shown to be the better substrates. Chitodimer, chitotrimer, and chitotetramer are the major products but monoacetyl chitodimer, monoacetyl chitotrimer, and monoacetyl chitotetramer are also produced. This is Endo-chitosanase (csn) from Aspergillus fumigatus (Neosartorya fumigata).